Here is a 324-residue protein sequence, read N- to C-terminus: MDPVQSHGSQSSLPPPFHARDFQLHLQQQQQEFFLHHHQQQRNQTDGDQQGGSGGNRQIKMDREETSDNIDNIANNSGSEGKDIDIHGGSGEGGGGSGGDHQMTRRPRGRPAGSKNKPKPPIIITRDSANALRTHVMEIGDGCDLVESVATFARRRQRGVCVMSGTGNVTNVTIRQPGSHPSPGSVVSLHGRFEILSLSGSFLPPPAPPTATGLSVYLAGGQGQVVGGSVVGPLLCAGPVVVMAASFSNAAYERLPLEEDEMQTPVHGGGGGGSLESPPMMGQQLQHQQQAMSGHQGLPPNLLGSVQLQQQHDQSYWSTGRPPY.

Over residues 1–12 the composition is skewed to polar residues; it reads MDPVQSHGSQSS. 2 disordered regions span residues 1 to 122 and 262 to 324; these read MDPV…KPPI and MQTP…RPPY. A compositionally biased stretch (low complexity) spans 24–33; sequence LHLQQQQQEF. A compositionally biased stretch (polar residues) spans 69-79; sequence NIDNIANNSGS. Positions 88-99 are enriched in gly residues; the sequence is GGSGEGGGGSGG. The a.T hook DNA-binding region spans 105-117; that stretch reads RRPRGRPAGSKNK. One can recognise a PPC domain in the interval 129 to 268; the sequence is ANALRTHVME…EDEMQTPVHG (140 aa). Low complexity predominate over residues 280-297; that stretch reads MMGQQLQHQQQAMSGHQG. Positions 304-318 are enriched in polar residues; it reads GSVQLQQQHDQSYWS.

Its subcellular location is the nucleus. Functionally, transcription factor that specifically binds AT-rich DNA sequences related to the nuclear matrix attachment regions (MARs). The polypeptide is AT-hook motif nuclear-localized protein 24 (Arabidopsis thaliana (Mouse-ear cress)).